Here is a 626-residue protein sequence, read N- to C-terminus: Putative L-type lectin-domain containing receptor kinase V.8 (626 aa).

The signal sequence occupies residues 1 to 21 (MPSELKVLHIVLVLLYTLSSS). Residues 22–212 (TYNSNGNWTL…SIGAFHYMLS (191 aa)) form a legume-lectin like region. At 22–245 (TYNSNGNWTL…PKKSSDRTKK (224 aa)) the chain is on the extracellular side. N-linked (GlcNAc...) asparagine glycosylation is found at N28, N59, N112, and N162. Residues 246–266 (ILAVCLTLAVFAVFVASGICF) form a helical membrane-spanning segment. Residues 267–626 (VFYTRHKKVK…LTNSFLSHGR (360 aa)) are Cytoplasmic-facing. Residues 303–562 (FKEKQLLGKG…GLLCAHHTEL (260 aa)) enclose the Protein kinase domain. ATP is bound by residues 309–317 (LGKGGFGQV) and K332. D429 acts as the Proton acceptor in catalysis.

In the C-terminal section; belongs to the protein kinase superfamily. Ser/Thr protein kinase family. It in the N-terminal section; belongs to the leguminous lectin family.

The protein localises to the cell membrane. The catalysed reaction is L-seryl-[protein] + ATP = O-phospho-L-seryl-[protein] + ADP + H(+). It carries out the reaction L-threonyl-[protein] + ATP = O-phospho-L-threonyl-[protein] + ADP + H(+). The chain is Putative L-type lectin-domain containing receptor kinase V.8 (LECRK58) from Arabidopsis thaliana (Mouse-ear cress).